Here is a 566-residue protein sequence, read N- to C-terminus: MEKYENLGLVGEGSYGMVMKCRNKDSGRIVAIKKFLESDDDKMVKKIAMREIKLLKQLRHENLVNLLEVCKKKKRWYLVFEFVDHTILDDLELFPNGLDDQVVQKYLFQIINGIGFCHSHNIIHRDIKPENILVSQSGVVKLCDFGFARTLAAPGEVYTDYVATRWYRAPELLVGDVKYGKAVDVWAIGCLVTEMLMGEPLFPGDSDIDQLYLIMRCLGNLIPRHQELFYKNPVFAGVRLPEIKESEPLERRYPKLSEVVIDLAKKCLHVDPDKRPFCAELLHHDFFQMDGFAERFSQELQMKVQKDARNISLSKKSQNRKKEKEKDDSLGEERKTLVVQDTNVDSKFKDSKVFKIKGSKIDGEKVDKGNRAAVSMTVGPSHIKAVPSTSLRDCSNVSVDHTRNPGMAIPPLTHNLSAVAPGINSGMGTIPGVQSYRVDEKTKKYCIPFVKPNKHSPSGIYNMNVTTSVSSEKNLLQANKKRGEYSKTDVRLPELNYNHLPELRALEGIARNSRLIRKENKILSESRIPSLAAIDLHTPNIAVHQVSGSPLSDGSEADSPWMEHQH.

The Protein kinase domain occupies 4–287 (YENLGLVGEG…CAELLHHDFF (284 aa)). Residues 10–18 (VGEGSYGMV) and lysine 33 contribute to the ATP site. The [NKR]KIAxRE motif lies at 45-51 (KKIAMRE). The active-site Proton acceptor is aspartate 126. 2 disordered regions span residues 307 to 334 (DARN…GEER) and 545 to 566 (QVSG…EHQH). Basic and acidic residues predominate over residues 320-334 (RKKEKEKDDSLGEER).

Belongs to the protein kinase superfamily. CMGC Ser/Thr protein kinase family. CDC2/CDKX subfamily.

The protein localises to the cytoplasm. It is found in the nucleus. It catalyses the reaction L-seryl-[protein] + ATP = O-phospho-L-seryl-[protein] + ADP + H(+). The catalysed reaction is L-threonyl-[protein] + ATP = O-phospho-L-threonyl-[protein] + ADP + H(+). In Oryctolagus cuniculus (Rabbit), this protein is Cyclin-dependent kinase-like 2.